The following is a 106-amino-acid chain: Starvation responsive small protein A (106 aa).

The chain crosses the membrane as a helical span at residues 15 to 32; that stretch reads ILLVNAGLISAYGVRIIF.

It localises to the cell membrane. In terms of biological role, involved in starvation response and aggregation stage of the life cycle. May be involved in fruiting body morphogenesis and spore formation. This is Starvation responsive small protein A from Dictyostelium discoideum (Social amoeba).